Reading from the N-terminus, the 604-residue chain is Prostaglandin G/H synthase 2 (604 aa).

An N-terminal signal peptide occupies residues 1–17; that stretch reads MLARALLLCAVLALSHT. Residues 18–55 form the EGF-like domain; sequence ANPCCSHPCQNRGVCMSVGFDQYKCDCTRTGFYGENCS. 4 cysteine pairs are disulfide-bonded: cysteine 21-cysteine 32, cysteine 22-cysteine 145, cysteine 26-cysteine 42, and cysteine 44-cysteine 54. A glycan (N-linked (GlcNAc...) asparagine) is linked at asparagine 53. Arginine 106 is a binding site for substrate. Asparagine 130 carries N-linked (GlcNAc...) asparagine glycosylation. Catalysis depends on histidine 193, which acts as the Proton acceptor. A substrate-binding site is contributed by tyrosine 341. Residue tyrosine 371 is the For cyclooxygenase activity of the active site. Residue histidine 374 participates in heme b binding. Residue asparagine 396 is glycosylated (N-linked (GlcNAc...) asparagine). Cysteine 526 is subject to S-nitrosocysteine. Residues cysteine 555 and cysteine 561 are joined by a disulfide bond. Residue serine 565 is modified to O-acetylserine. A glycan (N-linked (GlcNAc...) asparagine) is linked at asparagine 580.

Belongs to the prostaglandin G/H synthase family. As to quaternary structure, homodimer. Requires heme b as cofactor. In terms of processing, S-nitrosylation by NOS2 (iNOS) activates enzyme activity. S-nitrosylation may take place on different Cys residues in addition to Cys-526. Acetylated at Ser-565 by SPHK1. During neuroinflammation, acetylation by SPHK1 promotes neuronal secretion of specialized preresolving mediators (SPMs), especially 15-R-lipoxin A4, which results in an increase of phagocytic microglia.

It localises to the microsome membrane. The protein resides in the endoplasmic reticulum membrane. It is found in the nucleus inner membrane. The protein localises to the nucleus outer membrane. The catalysed reaction is (5Z,8Z,11Z,14Z)-eicosatetraenoate + AH2 + 2 O2 = prostaglandin H2 + A + H2O. It carries out the reaction (5Z,8Z,11Z,14Z)-eicosatetraenoate + 2 O2 = prostaglandin G2. The enzyme catalyses prostaglandin G2 + AH2 = prostaglandin H2 + A + H2O. It catalyses the reaction (5Z,8Z,11Z,14Z,17Z)-eicosapentaenoate + 2 O2 = prostaglandin G3. The catalysed reaction is prostaglandin G3 + AH2 = prostaglandin H3 + A + H2O. It carries out the reaction (8Z,11Z,14Z)-eicosatrienoate + 2 O2 = prostaglandin G1. The enzyme catalyses prostaglandin G1 + AH2 = prostaglandin H1 + A + H2O. It catalyses the reaction 2-(5Z,8Z,11Z,14Z)-eicosatetraenoyl-sn-glycero-3-phosphoethanolamine + 2 O2 = 2-(prostaglandin G2)-sn-glycero-3-phosphoethanolamine. The catalysed reaction is 2-(prostaglandin G2)-sn-glycero-3-phosphoethanolamine + AH2 = 2-(prostaglandin H2)-sn-glycero-3-phosphoethanolamine + A + H2O. It carries out the reaction 2-(5Z,8Z,11Z,14Z)-eicosatetraenoyl-sn-glycero-3-phosphocholine + 2 O2 = 2-(prostaglandin G2)-sn-glycero-3-phosphocholine. The enzyme catalyses 2-(prostaglandin G2)-sn-glycero-3-phosphocholine + AH2 = 2-(prostaglandin H2)-sn-glycero-3-phosphocholine + A + H2O. It catalyses the reaction (15S)-hydroperoxy-(5Z,8Z,11Z,13E)-eicosatetraenoate + AH2 = (15S)-hydroxy-(5Z,8Z,11Z,13E)-eicosatetraenoate + A + H2O. The catalysed reaction is 2-(5Z,8Z,11Z,14Z)-eicosatetraenoyl-sn-glycero-3-phosphocholine + AH2 + O2 = 2-[(15S)-hydroxy-(5Z,8Z,11Z,13E)-eicosatetraenoyl]-sn-glycero-3-phosphocholine + A + H2O. It carries out the reaction 2-(5Z,8Z,11Z,14Z)-eicosatetraenoyl-sn-glycero-3-phosphocholine + AH2 + O2 = 2-[(15R)-hydroxy-(5Z,8Z,11Z,13E)-eicosatetraenoyl]-sn-glycero-3-phosphocholine + A + H2O. The enzyme catalyses 2-(5Z,8Z,11Z,14Z)-eicosatetraenoyl-sn-glycero-3-phosphocholine + AH2 + O2 = 2-[(11R)-hydroxy-(5Z,8Z,12E,14Z)-eicosatetraenoyl]-sn-glycero-3-phosphocholine + A + H2O. It catalyses the reaction (9Z,12Z)-octadecadienoate + AH2 + O2 = 9-hydroxy-(10E,12Z)-octadecadienoate + A + H2O. The catalysed reaction is (9Z,12Z)-octadecadienoate + AH2 + O2 = 13-hydroxy-(9Z,11E)-octadecadienoate + A + H2O. It carries out the reaction (5Z,8Z,11Z,14Z)-eicosatetraenoate + AH2 + O2 = (15R)-hydroxy-(5Z,8Z,11Z,13E)-eicosatetraenoate + A + H2O. The enzyme catalyses (5Z,8Z,11Z,14Z)-eicosatetraenoate + AH2 + O2 = (11R)-hydroxy-(5Z,8Z,12E,14Z)-eicosatetraenoate + A + H2O. It catalyses the reaction (5Z,8Z,11Z,14Z,17Z)-eicosapentaenoate + AH2 + O2 = (11R)-hydroxy-(5Z,8Z,12E,14Z,17Z)-eicosapentaenoate + A + H2O. The catalysed reaction is (5Z,8Z,11Z,14Z,17Z)-eicosapentaenoate + AH2 + O2 = (18S)-hydroxy-(5Z,8Z,11Z,14Z,16E)-eicosapentaenoate + A + H2O. It carries out the reaction (5Z,8Z,11Z,14Z,17Z)-eicosapentaenoate + AH2 + O2 = (18R)-hydroxy-(5Z,8Z,11Z,14Z,16E)-eicosapentaenoate + A + H2O. The enzyme catalyses (5Z,8Z,11Z,14Z,17Z)-eicosapentaenoate + AH2 + O2 = (15R)-hydroxy-(5Z,8Z,11Z,13E,17Z)-eicosapentaenoate + A + H2O. It catalyses the reaction (5Z,8Z,11Z,14Z,17Z)-eicosapentaenoate + AH2 + O2 = (15S)-hydroxy-(5Z,8Z,11Z,13E,17Z)-eicosapentaenoate + A + H2O. The catalysed reaction is (7Z,10Z,13Z,16Z,19Z)-docosapentaenoate + AH2 + O2 = 13R-hydroxy-(7Z,10Z,14E,16Z,19Z)-docosapentaenoate + A + H2O. It carries out the reaction (4Z,7Z,10Z,13Z,16Z,19Z)-docosahexaenoate + AH2 + O2 = 13-hydroxy-(4Z,7Z,10Z,14E,16Z,19Z)-docosahexaenoate + A + H2O. The enzyme catalyses (5S)-hydroxy-(6E,8Z,11Z,14Z)-eicosatetraenoate + AH2 + O2 = (5S,15R)-dihydroxy-(6E,8Z,11Z,13E)-eicosatetraenoate + A + H2O. It catalyses the reaction (4Z,7Z,10Z,13Z,16Z,19Z)-docosahexaenoate + AH2 + O2 = 17R-hydroxy-(4Z,7Z,10Z,13Z,15E,19Z)-docosahexaenoate + A + H2O. The catalysed reaction is (5S)-hydroxy-(6E,8Z,11Z,14Z)-eicosatetraenoate + AH2 + O2 = (5S,15S)-dihydroxy-(6E,8Z,11Z,13E)-eicosatetraenoate + A + H2O. It carries out the reaction (5S)-hydroxy-(6E,8Z,11Z,14Z)-eicosatetraenoate + AH2 + O2 = (5S,11R)-dihydroxy-(6E,8Z,12E,14Z)-eicosatetraenoate + A + H2O. The enzyme catalyses 2-(5Z,8Z,11Z,14Z-eicosatetraenoyl)-glycerol + 2 O2 = 2-glyceryl-prostaglandin G2. It catalyses the reaction 2-glyceryl-prostaglandin G2 + AH2 = 2-glyceryl-prostaglandin H2 + A + H2O. The catalysed reaction is (5Z,8Z,11Z,14Z)-eicosatetraenoate + O2 = (15R)-hydroperoxy-(5Z,8Z,11Z,13E)-eicosatetraenoate. It carries out the reaction (5Z,8Z,11Z,14Z)-eicosatetraenoate + O2 = 11R-hydroperoxy-(5Z,8Z,12E,14Z)-eicosatetraenoate. The enzyme catalyses (9Z,12Z)-octadecadienoate + AH2 + O2 = (9R)-hydroxy-(10E,12Z)-octadecadienoate + A + H2O. It catalyses the reaction (9Z,12Z)-octadecadienoate + AH2 + O2 = (9S)-hydroxy-(10E,12Z)-octadecadienoate + A + H2O. The catalysed reaction is (9Z,12Z)-octadecadienoate + AH2 + O2 = (13S)-hydroxy-(9Z,11E)-octadecadienoate + A + H2O. It carries out the reaction (9Z,12Z)-octadecadienoate + AH2 + O2 = (13R)-hydroxy-(9Z,11E)-octadecadienoate + A + H2O. It participates in lipid metabolism; prostaglandin biosynthesis. Its activity is regulated as follows. The cyclooxygenase activity is inhibited by nonsteroidal anti-inflammatory drugs (NSAIDs) including aspirin, ibuprofen, flurbiprofen, celecoxib, flufenamic, mefenamic and tolfenamic acids as well as by hydroperoxide scavenger erythrocyte glutathione peroxidase GPX1. Aspirin triggers enzyme acetylation turning off its ability to generate pro-inflammatory prostaglandins, but switches on its capacity to produce anti-inflammatory lipid mediators involved in inflammation resolution. Aspirin enhances lipoxygenase-type activity toward production of epimers with R stereochemistry such as 15R-HETE, 18R-HEPE, 15R-HEPE and 17R-HDHA. Atorvastatin, a cholesterol-lowering drug, triggers enzyme S-nitrosylation increasing production of 13-series resolvins (RvTs). Dual cyclooxygenase and peroxidase in the biosynthesis pathway of prostanoids, a class of C20 oxylipins mainly derived from arachidonate ((5Z,8Z,11Z,14Z)-eicosatetraenoate, AA, C20:4(n-6)), with a particular role in the inflammatory response. The cyclooxygenase activity oxygenates AA to the hydroperoxy endoperoxide prostaglandin G2 (PGG2), and the peroxidase activity reduces PGG2 to the hydroxy endoperoxide prostaglandin H2 (PGH2), the precursor of all 2-series prostaglandins and thromboxanes. This complex transformation is initiated by abstraction of hydrogen at carbon 13 (with S-stereochemistry), followed by insertion of molecular O2 to form the endoperoxide bridge between carbon 9 and 11 that defines prostaglandins. The insertion of a second molecule of O2 (bis-oxygenase activity) yields a hydroperoxy group in PGG2 that is then reduced to PGH2 by two electrons. Similarly catalyzes successive cyclooxygenation and peroxidation of dihomo-gamma-linoleate (DGLA, C20:3(n-6)) and eicosapentaenoate (EPA, C20:5(n-3)) to corresponding PGH1 and PGH3, the precursors of 1- and 3-series prostaglandins. In an alternative pathway of prostanoid biosynthesis, converts 2-arachidonoyl lysophopholipids to prostanoid lysophopholipids, which are then hydrolyzed by intracellular phospholipases to release free prostanoids. Metabolizes 2-arachidonoyl glycerol yielding the glyceryl ester of PGH2, a process that can contribute to pain response. Generates lipid mediators from n-3 and n-6 polyunsaturated fatty acids (PUFAs) via a lipoxygenase-type mechanism. Oxygenates PUFAs to hydroperoxy compounds and then reduces them to corresponding alcohols. Plays a role in the generation of resolution phase interaction products (resolvins) during both sterile and infectious inflammation. Metabolizes docosahexaenoate (DHA, C22:6(n-3)) to 17R-HDHA, a precursor of the D-series resolvins (RvDs). As a component of the biosynthetic pathway of E-series resolvins (RvEs), converts eicosapentaenoate (EPA, C20:5(n-3)) primarily to 18S-HEPE that is further metabolized by ALOX5 and LTA4H to generate 18S-RvE1 and 18S-RvE2. In vascular endothelial cells, converts docosapentaenoate (DPA, C22:5(n-3)) to 13R-HDPA, a precursor for 13-series resolvins (RvTs) shown to activate macrophage phagocytosis during bacterial infection. In activated leukocytes, contributes to oxygenation of hydroxyeicosatetraenoates (HETE) to diHETES (5,15-diHETE and 5,11-diHETE). Can also use linoleate (LA, (9Z,12Z)-octadecadienoate, C18:2(n-6)) as substrate and produce hydroxyoctadecadienoates (HODEs) in a regio- and stereospecific manner, being (9R)-HODE ((9R)-hydroxy-(10E,12Z)-octadecadienoate) and (13S)-HODE ((13S)-hydroxy-(9Z,11E)-octadecadienoate) its major products. During neuroinflammation, plays a role in neuronal secretion of specialized preresolving mediators (SPMs) 15R-lipoxin A4 that regulates phagocytic microglia. This Homo sapiens (Human) protein is Prostaglandin G/H synthase 2.